The following is a 218-amino-acid chain: 1-Cys peroxiredoxin PER1 (218 aa).

The Thioredoxin domain occupies 4-164; it reads LTIGDTVPNL…VVRAVDSLLT (161 aa). C46 serves as the catalytic Cysteine sulfenic acid (-SOH) intermediate. Residues 194–217 carry the Bipartite nuclear localization signal motif; that stretch reads KKMFPQGFETADLPSKKGYLRFTK.

This sequence belongs to the peroxiredoxin family. Prx6 subfamily.

It is found in the nucleus. The protein resides in the cytoplasm. The catalysed reaction is a hydroperoxide + [thioredoxin]-dithiol = an alcohol + [thioredoxin]-disulfide + H2O. Functionally, thiol-specific peroxidase that catalyzes the reduction of hydrogen peroxide and organic hydroperoxides to water and alcohols, respectively. Seems to contribute to the inhibition of germination during stress. The sequence is that of 1-Cys peroxiredoxin PER1 (PER1) from Triticum aestivum (Wheat).